The following is a 217-amino-acid chain: MGLRIKICGLRDPQQAIAIADLGATAIGFIAVRQSPRYVSPAQVAEIAQALQKTHPTVNRVGVFANATAEELEAYVAAGITSLQLHGDETLADSQRWRDRFPALELIKALRIRSTADLALAESFTDCVDTLLLDAYHPQMLGGTGATLDWQALQAFQPSRPWLLAGGLTPENITTALSQLHPAGIDLSSGVERSPGDKDLEKVTALFSSLARNSLLK.

The protein belongs to the TrpF family.

The enzyme catalyses N-(5-phospho-beta-D-ribosyl)anthranilate = 1-(2-carboxyphenylamino)-1-deoxy-D-ribulose 5-phosphate. It functions in the pathway amino-acid biosynthesis; L-tryptophan biosynthesis; L-tryptophan from chorismate: step 3/5. This is N-(5'-phosphoribosyl)anthranilate isomerase from Synechococcus sp. (strain ATCC 27144 / PCC 6301 / SAUG 1402/1) (Anacystis nidulans).